Here is a 496-residue protein sequence, read N- to C-terminus: MKKYILSLDQGTTSSRAILFNKKGEIVHSAQKEFTQHFPKPGWVEHNAQEIWGSILAVIATCLSEADVKPEQIAGIGITNQRETAVVWDKTTGKPIYNAIVWQSRQTAEICDELKEKGYSEMVREKTGLLIDAYFSGTKVKWILDNVEGAREKAENGDLLFGTIDTWLVWKLSGGKAHVTDYSNASRTLMFNIHDLQWDDELLDMLTVPKSMLPEVRPSSEVYGETIDYHFFGQNVPIAGVAGDQQAALFGQACFGEGMAKNTYGTGCFMLMNTGEKAVASEHGLLTTIAWGIDGKVNYALEGSIFVAGSAIQWLRDGMRMFKDASESEVYASRVESTDGVYVVPAFVGLGTPYWDSEVRGAMFGVTRGTTKEHFIRATLESLAYQTKDVLCAMEADSGIELKTLRVDGGAVKNNFLMKFQSDILDVPVERPVINETTALGAAYLAGLAVGYWKNQDEIKEQWHMDKRFEPTMEAETSEELYAGWKKAIEATKAFK.

ADP is bound at residue Thr12. Positions 12, 13, and 14 each coordinate ATP. Thr12 provides a ligand contact to sn-glycerol 3-phosphate. Arg16 contacts ADP. Sn-glycerol 3-phosphate contacts are provided by Arg82, Glu83, and Tyr134. 3 residues coordinate glycerol: Arg82, Glu83, and Tyr134. Residue His230 is modified to Phosphohistidine; by HPr. Asp244 is a binding site for sn-glycerol 3-phosphate. Asp244 and Gln245 together coordinate glycerol. Residues Thr266 and Gly309 each coordinate ADP. Thr266, Gly309, Gln313, and Gly410 together coordinate ATP. ADP is bound by residues Gly410 and Asn414.

The protein belongs to the FGGY kinase family. Homotetramer and homodimer (in equilibrium). In terms of processing, the phosphoenolpyruvate-dependent sugar phosphotransferase system (PTS), including enzyme I, and histidine-containing protein (HPr) are required for the phosphorylation, which leads to the activation of the enzyme.

It catalyses the reaction glycerol + ATP = sn-glycerol 3-phosphate + ADP + H(+). The protein operates within polyol metabolism; glycerol degradation via glycerol kinase pathway; sn-glycerol 3-phosphate from glycerol: step 1/1. Activated by phosphorylation and inhibited by fructose 1,6-bisphosphate (FBP). In terms of biological role, key enzyme in the regulation of glycerol uptake and metabolism. Catalyzes the phosphorylation of glycerol to yield sn-glycerol 3-phosphate. The sequence is that of Glycerol kinase from Bacillus thuringiensis subsp. konkukian (strain 97-27).